Consider the following 473-residue polypeptide: Rop guanine nucleotide exchange factor 3 (473 aa).

The interval 1–28 (MENLSNPDENDDHQSPRSIDQNDQSAVE) is disordered. Polar residues predominate over residues 16–28 (PRSIDQNDQSAVE). Residues 95–473 (LVVQEISEPE…YVDKTMRGSE (379 aa)) form the PRONE domain.

Guanine-nucleotide exchange factor (GEF) that acts as an activator of Rop (Rho of plants) GTPases by promoting the exchange of GDP for GTP. The protein is Rop guanine nucleotide exchange factor 3 (ROPGEF3) of Arabidopsis thaliana (Mouse-ear cress).